We begin with the raw amino-acid sequence, 417 residues long: MKNYTELLKSELIMALGCTEPISIALAAAKAREVLGDIPTKIEVKCSGNIIKNVKGVTVPNTNGMKGVEAATAIGTVAGDSSLGLEVLSKVTDEDIKAAKCMLDNNIIKVSLKEGVENLDIEIVAEDDKENTVDVEIKNKHTNIVKVTKNDKVIHIDNCYTHTPEYENYDELSVKDIFEYANNVDLDEVRDLLEDQITLNSKISDEGLTGKWGVAMGKILMDEDDSIRSKAKARAAAGSDARMSGCSLPVVINAGSGNQGITCTMPLVVFANEKNYDRETLYRGLLITNLVALHIKRFIGRLSAFCGVTSAGVAAGAGICYMETKNLDLIEKTIGNALMIASGMICDGAKPSCAAKIATAVDAGISGYYLAKNNRNFEAGDGLLKDDIEETIRSIGYVAKEGMKETDIVVLHTMIEK.

This sequence belongs to the UPF0597 family.

This chain is UPF0597 protein FMG_0209, found in Finegoldia magna (strain ATCC 29328 / DSM 20472 / WAL 2508) (Peptostreptococcus magnus).